The sequence spans 165 residues: MALNLQDKQAIVAEVNEVAKGALSAVVADSRGVTVDKMTELRKAGREAGVYMRVVRNTLMRRVVEGTPFECLKDTFVGPTLIAFSHEHPGAAARLFKDFAKANAKFEIKAAAFEGEMIPAAQIDRLATLPTYDEAIARLMATMKEAAAGKLVRTLAALRDQKEAA.

Belongs to the universal ribosomal protein uL10 family. As to quaternary structure, part of the ribosomal stalk of the 50S ribosomal subunit. The N-terminus interacts with L11 and the large rRNA to form the base of the stalk. The C-terminus forms an elongated spine to which L12 dimers bind in a sequential fashion forming a multimeric L10(L12)X complex.

Functionally, forms part of the ribosomal stalk, playing a central role in the interaction of the ribosome with GTP-bound translation factors. This is Large ribosomal subunit protein uL10 from Serratia proteamaculans (strain 568).